We begin with the raw amino-acid sequence, 455 residues long: Alcohol acyl transferase 1 allele RGb (455 aa).

Residues histidine 164 and asparagine 385 each act as proton acceptor in the active site.

Belongs to the plant acyltransferase family.

In terms of biological role, involved in the biosynthesis of volatile esters which confer ripe apple fruit flavor. Alcohol acyl transferase that can use a wide range of alcohols as substrate to produce esters. The sequence is that of Alcohol acyl transferase 1 allele RGb from Malus domestica (Apple).